A 67-amino-acid polypeptide reads, in one-letter code: Large ribosomal subunit protein uL29 (67 aa).

Belongs to the universal ribosomal protein uL29 family.

The chain is Large ribosomal subunit protein uL29 from Ehrlichia canis (strain Jake).